Consider the following 446-residue polypeptide: D(1A) dopamine receptor (446 aa).

The Extracellular segment spans residues 1–22 (MAPNTSTMDEAGLPAERDFSFR). N-linked (GlcNAc...) asparagine glycosylation is present at asparagine 4. The chain crosses the membrane as a helical span at residues 23–48 (ILTACFLSLLILSTLLGNTLVCAAVI). Residues 49 to 59 (RFRHLRSKVTN) lie on the Cytoplasmic side of the membrane. Residues 60 to 86 (FFVISLAVSDLLVAVLVMPWKAVAEIA) form a helical membrane-spanning segment. Residues 87 to 95 (GFWPLGPFC) lie on the Extracellular side of the membrane. Cysteine 95 and cysteine 186 form a disulfide bridge. A helical membrane pass occupies residues 96 to 118 (NIWVAFDIMCSTASILNLCVISV). Topologically, residues 119-137 (DRYWAISSPFQYERKMTPK) are cytoplasmic. The chain crosses the membrane as a helical span at residues 138–162 (AAFILISVAWTLSVLISFIPVQLSW). Over 163-192 (HKAKPTWPLDGNFTSLEDTEDDNCDTRLSR) the chain is Extracellular. Residues 193–218 (TYAISSSLISFYIPVAIMIVTYTSIY) traverse the membrane as a helical segment. Residues 219 to 272 (RIAQKQIRRISALERAAVHAKNCQTTAGNGNPVECAQSESSFKMSFKRETKVLK) lie on the Cytoplasmic side of the membrane. Residues 273–299 (TLSVIMGVFVCCWLPFFISNCMVPFCG) form a helical membrane-spanning segment. At 300 to 312 (SEETQPFCIDSIT) the chain is on the extracellular side. The chain crosses the membrane as a helical span at residues 313-337 (FDVFVWFGWANSSLNPIIYAFNADF). Residues 338–446 (QKAFSTLLGC…PVTHSGQHST (109 aa)) lie on the Cytoplasmic side of the membrane. S-palmitoyl cysteine attachment occurs at residues cysteine 347 and cysteine 351.

This sequence belongs to the G-protein coupled receptor 1 family. As to quaternary structure, interacts with DNAJC14 via its C-terminus PubMed:11331877. Interacts with DRD2. Interacts with DORIP1. N-glycosylated. In terms of tissue distribution, brain, in the striatum, the nucleus accumbens, and the olfactory tubercle.

It is found in the cell membrane. The protein localises to the endoplasmic reticulum membrane. The protein resides in the cell projection. It localises to the dendrite. Its subcellular location is the cilium membrane. It is found in the dendritic spine. Dopamine receptor whose activity is mediated by G proteins which activate adenylyl cyclase. The chain is D(1A) dopamine receptor (Drd1) from Rattus norvegicus (Rat).